We begin with the raw amino-acid sequence, 65 residues long: Large ribosomal subunit protein bL32 (65 aa).

The protein belongs to the bacterial ribosomal protein bL32 family.

This Rickettsia prowazekii (strain Madrid E) protein is Large ribosomal subunit protein bL32 (rpmF).